Here is a 79-residue protein sequence, read N- to C-terminus: Antimicrobial peptide UyCT1 (79 aa).

Positions 1–23 are cleaved as a signal peptide; it reads MKTQLAFLAITVILMQLFAQTEA. Isoleucine 37 carries the post-translational modification Isoleucine amide. Residues 41–79 constitute a propeptide that is removed on maturation; the sequence is GLRNVDQIADLFDSGLSDADDLFDSGLSDADAKFMKMFM.

It belongs to the non-disulfide-bridged peptide (NDBP) superfamily. Short antimicrobial peptide (group 4) family. As to expression, expressed by the venom gland.

The protein localises to the secreted. The protein resides in the target cell membrane. Functionally, inhibits the growth of Gram-positive (S.aureus, MIC=15 uM) and Gram-negative bacteria (E.coli, MIC=10 uM and P.aeruginosa, MIC=10 uM). It also shows 26% of hemolysis when 15 uM are tested (81% at 50 uM). In terms of biological role, inhibits the growth of Gram-negative bacteria (E.coli, MIC=25 uM and P.aeruginosa, MIC=40 uM). It also shows 7% of hemolysis when 50 uM are tested. Does not show activity against the Gram-positive bacteria S.aureus. This is Antimicrobial peptide UyCT1 from Urodacus yaschenkoi (Inland robust scorpion).